Consider the following 56-residue polypeptide: MGQMVPPRSIQNEDFWKNPWDVGGLTVIGLFTSTFLLFVLFAVVFGYVEKAVFEEE.

A helical membrane pass occupies residues 25 to 45; that stretch reads LTVIGLFTSTFLLFVLFAVVF.

Homooligomer. Can also form heterooligomers with other sarcoplasmic/endoplasmic reticulum calcium ATPase (SERCA) regulators ARLN, PLN, SLN and STRIT1/DWORF. Monomer. Interacts as a monomer with ATP2A2/SERCA2; the interaction results in inhibition of ATP2A2 Ca(2+) affinity. In terms of tissue distribution, largely expressed in non-muscle tissues with the exception of weak expression in body wall muscles at 14.5 dpc. Expressed in epithelial cells of the trachea, bronchus, lung, intestine, pancreas, and liver.

The protein resides in the endoplasmic reticulum membrane. Inhibits the activity of the calcium ATPases ATP2A2/SERCA2 and ATP2A3/SERCA3 by decreasing their apparent affinity for Ca(2+). This chain is Endoregulin (Erln), found in Mus musculus (Mouse).